The chain runs to 464 residues: Probable acid phosphatase DDB_G0284753 (464 aa).

The interval 1 to 29 (MFSYFRKSQQKVEENQNGGGGDGRGSGIK) is disordered. Gly residues predominate over residues 17–26 (NGGGGDGRGS). The active-site Nucleophile is the H81. The disordered stretch occupies residues 180 to 202 (SFTDEQEKSPHHSSFLVKPDNEE). The active-site Proton donor is D347.

Belongs to the histidine acid phosphatase family.

The catalysed reaction is a phosphate monoester + H2O = an alcohol + phosphate. The polypeptide is Probable acid phosphatase DDB_G0284753 (Dictyostelium discoideum (Social amoeba)).